A 110-amino-acid chain; its full sequence is Protein OPG154 (110 aa).

The protein belongs to the orthopoxvirus OPG154 protein family. In terms of assembly, homohexamers, covalently linked. Interacts with OPG144 and OPG153.

The protein resides in the virion. Its function is as follows. Structural protein involved in the envelopment of mature virion (MV) to form the wrapped virion (WV). The wrapping consists of the addition of Golgi membranes to the mature virion. Participates in mature virion (MV) movement within the infected cell. May play an indirect role in MV-cell fusion. The sequence is that of Protein OPG154 (OPG154) from Homo sapiens (Human).